The sequence spans 165 residues: Large ribosomal subunit protein eL15 (165 aa).

The disordered stretch occupies residues 126–147 (TSAGRKSRGLGKGHKFHHTIGG). The span at 130–143 (RKSRGLGKGHKFHH) shows a compositional bias: basic residues.

This sequence belongs to the eukaryotic ribosomal protein eL15 family. As to quaternary structure, component of the large ribosomal subunit.

The protein localises to the cytoplasm. Component of the large ribosomal subunit. The ribosome is a large ribonucleoprotein complex responsible for the synthesis of proteins in the cell. This chain is Large ribosomal subunit protein eL15 (RPL15), found in Gallus gallus (Chicken).